The following is a 165-amino-acid chain: 2-C-methyl-D-erythritol 2,4-cyclodiphosphate synthase (165 aa).

Aspartate 12 and histidine 14 together coordinate a divalent metal cation. 4-CDP-2-C-methyl-D-erythritol 2-phosphate contacts are provided by residues 12-14 (DVH) and 38-39 (HS). Histidine 46 serves as a coordination point for a divalent metal cation. 4-CDP-2-C-methyl-D-erythritol 2-phosphate is bound by residues 60–62 (DIG), 65–69 (FPDTD), phenylalanine 143, and arginine 146.

The protein belongs to the IspF family. Homotrimer. Requires a divalent metal cation as cofactor.

The catalysed reaction is 4-CDP-2-C-methyl-D-erythritol 2-phosphate = 2-C-methyl-D-erythritol 2,4-cyclic diphosphate + CMP. Its pathway is isoprenoid biosynthesis; isopentenyl diphosphate biosynthesis via DXP pathway; isopentenyl diphosphate from 1-deoxy-D-xylulose 5-phosphate: step 4/6. Its function is as follows. Involved in the biosynthesis of isopentenyl diphosphate (IPP) and dimethylallyl diphosphate (DMAPP), two major building blocks of isoprenoid compounds. Catalyzes the conversion of 4-diphosphocytidyl-2-C-methyl-D-erythritol 2-phosphate (CDP-ME2P) to 2-C-methyl-D-erythritol 2,4-cyclodiphosphate (ME-CPP) with a corresponding release of cytidine 5-monophosphate (CMP). The protein is 2-C-methyl-D-erythritol 2,4-cyclodiphosphate synthase of Aromatoleum aromaticum (strain DSM 19018 / LMG 30748 / EbN1) (Azoarcus sp. (strain EbN1)).